The primary structure comprises 179 residues: Cytochrome b6-f complex iron-sulfur subunit (179 aa).

Residues leucine 21–isoleucine 43 traverse the membrane as a helical segment. In terms of domain architecture, Rieske spans glycine 61 to phenylalanine 162. Residues cysteine 108, histidine 110, cysteine 126, and histidine 129 each coordinate [2Fe-2S] cluster. A disulfide bond links cysteine 113 and cysteine 128.

The protein belongs to the Rieske iron-sulfur protein family. In terms of assembly, the 4 large subunits of the cytochrome b6-f complex are cytochrome b6, subunit IV (17 kDa polypeptide, PetD), cytochrome f and the Rieske protein, while the 4 small subunits are PetG, PetL, PetM and PetN. The complex functions as a dimer. Requires [2Fe-2S] cluster as cofactor.

It localises to the cellular thylakoid membrane. It carries out the reaction 2 oxidized [plastocyanin] + a plastoquinol + 2 H(+)(in) = 2 reduced [plastocyanin] + a plastoquinone + 4 H(+)(out). In terms of biological role, component of the cytochrome b6-f complex, which mediates electron transfer between photosystem II (PSII) and photosystem I (PSI), cyclic electron flow around PSI, and state transitions. This Trichodesmium erythraeum (strain IMS101) protein is Cytochrome b6-f complex iron-sulfur subunit.